The following is a 313-amino-acid chain: 4-hydroxy-3-methylbut-2-enyl diphosphate reductase (313 aa).

Cys12 serves as a coordination point for [4Fe-4S] cluster. Residues His41 and His74 each coordinate (2E)-4-hydroxy-3-methylbut-2-enyl diphosphate. Dimethylallyl diphosphate contacts are provided by His41 and His74. Positions 41 and 74 each coordinate isopentenyl diphosphate. A [4Fe-4S] cluster-binding site is contributed by Cys96. His124 lines the (2E)-4-hydroxy-3-methylbut-2-enyl diphosphate pocket. His124 provides a ligand contact to dimethylallyl diphosphate. His124 lines the isopentenyl diphosphate pocket. The active-site Proton donor is Glu126. Residue Thr164 participates in (2E)-4-hydroxy-3-methylbut-2-enyl diphosphate binding. Cys194 serves as a coordination point for [4Fe-4S] cluster. Positions 222, 223, 224, and 266 each coordinate (2E)-4-hydroxy-3-methylbut-2-enyl diphosphate. 4 residues coordinate dimethylallyl diphosphate: Ser222, Ser223, Asn224, and Ser266. Isopentenyl diphosphate contacts are provided by Ser222, Ser223, Asn224, and Ser266.

The protein belongs to the IspH family. It depends on [4Fe-4S] cluster as a cofactor.

The catalysed reaction is isopentenyl diphosphate + 2 oxidized [2Fe-2S]-[ferredoxin] + H2O = (2E)-4-hydroxy-3-methylbut-2-enyl diphosphate + 2 reduced [2Fe-2S]-[ferredoxin] + 2 H(+). It carries out the reaction dimethylallyl diphosphate + 2 oxidized [2Fe-2S]-[ferredoxin] + H2O = (2E)-4-hydroxy-3-methylbut-2-enyl diphosphate + 2 reduced [2Fe-2S]-[ferredoxin] + 2 H(+). The protein operates within isoprenoid biosynthesis; dimethylallyl diphosphate biosynthesis; dimethylallyl diphosphate from (2E)-4-hydroxy-3-methylbutenyl diphosphate: step 1/1. It participates in isoprenoid biosynthesis; isopentenyl diphosphate biosynthesis via DXP pathway; isopentenyl diphosphate from 1-deoxy-D-xylulose 5-phosphate: step 6/6. Catalyzes the conversion of 1-hydroxy-2-methyl-2-(E)-butenyl 4-diphosphate (HMBPP) into a mixture of isopentenyl diphosphate (IPP) and dimethylallyl diphosphate (DMAPP). Acts in the terminal step of the DOXP/MEP pathway for isoprenoid precursor biosynthesis. The sequence is that of 4-hydroxy-3-methylbut-2-enyl diphosphate reductase from Burkholderia pseudomallei (strain 1026b).